Here is a 154-residue protein sequence, read N- to C-terminus: MAARLCCQLDPARDVLCLRPVGAESRGRPLPGPLGALPPASPSAVPSDHGAHLSLRGLPVCAFSSAGPCALRFTSARRMETTVNAHRNLPKVLHKRTLGLSAMSTTDLEAYFKDCVFNEWEELGEEIRLKVFVLGGCRHKLVCSPAPCNFFTSA.

The tract at residues 68 to 117 is mitochondrial targeting sequence; it reads PCALRFTSARRMETTVNAHRNLPKVLHKRTLGLSAMSTTDLEAYFKDCVF.

This sequence belongs to the orthohepadnavirus protein X family. As to quaternary structure, may form homodimer. May interact with host CEBPA, CFLAR, CREB1, DDB1, E4F1, HBXIP, HSPD1/HSP60, NFKBIA, POLR2E and SMAD4. Interacts with host SMC5-SMC6 complex and induces its degradation. Interacts with host TRPC4AP; leading to prevent ubiquitination of TRPC4AP. Interacts with host PLSCR1; this interaction promotes ubiquitination and degradation of HBx and impairs HBx-mediated cell proliferation. Post-translationally, a fraction may be phosphorylated in insect cells and HepG2 cells, a human hepatoblastoma cell line. Phosphorylated in vitro by host protein kinase C or mitogen-activated protein kinase. N-acetylated in insect cells.

It localises to the host cytoplasm. The protein localises to the host nucleus. The protein resides in the host mitochondrion. Multifunctional protein that plays a role in silencing host antiviral defenses and promoting viral transcription. Does not seem to be essential for HBV infection. May be directly involved in development of cirrhosis and liver cancer (hepatocellular carcinoma). Most of cytosolic activities involve modulation of cytosolic calcium. The effect on apoptosis is controversial depending on the cell types in which the studies have been conducted. May induce apoptosis by localizing in mitochondria and causing loss of mitochondrial membrane potential. May also modulate apoptosis by binding host CFLAR, a key regulator of the death-inducing signaling complex (DISC). Promotes viral transcription by using the host E3 ubiquitin ligase DDB1 to target the SMC5-SMC6 complex to proteasomal degradation. This host complex would otherwise bind to viral episomal DNA, and prevents its transcription. Moderately stimulates transcription of many different viral and cellular transcription elements. Promoters and enhancers stimulated by HBx contain DNA binding sites for NF-kappa-B, AP-1, AP-2, c-EBP, ATF/CREB, or the calcium-activated factor NF-AT. The protein is Protein X of Hepatitis B virus genotype B1 subtype adw (isolate Japan/pJDW233/1988) (HBV-B).